Reading from the N-terminus, the 191-residue chain is Pyridoxal 5'-phosphate synthase subunit PdxT (191 aa).

Residue 46-48 (GES) coordinates L-glutamine. Cysteine 78 functions as the Nucleophile in the catalytic mechanism. L-glutamine-binding positions include arginine 105 and 133–134 (IR). Active-site charge relay system residues include histidine 169 and glutamate 171.

This sequence belongs to the glutaminase PdxT/SNO family. In the presence of PdxS, forms a dodecamer of heterodimers. Only shows activity in the heterodimer.

The enzyme catalyses aldehydo-D-ribose 5-phosphate + D-glyceraldehyde 3-phosphate + L-glutamine = pyridoxal 5'-phosphate + L-glutamate + phosphate + 3 H2O + H(+). It carries out the reaction L-glutamine + H2O = L-glutamate + NH4(+). It functions in the pathway cofactor biosynthesis; pyridoxal 5'-phosphate biosynthesis. Functionally, catalyzes the hydrolysis of glutamine to glutamate and ammonia as part of the biosynthesis of pyridoxal 5'-phosphate. The resulting ammonia molecule is channeled to the active site of PdxS. The chain is Pyridoxal 5'-phosphate synthase subunit PdxT from Brevibacillus brevis (strain 47 / JCM 6285 / NBRC 100599).